A 33-amino-acid chain; its full sequence is Mu-theraphotoxin-Ssp1a (33 aa).

3 disulfide bridges follow: cysteine 2–cysteine 17, cysteine 9–cysteine 22, and cysteine 16–cysteine 29. Leucine 33 carries the leucine amide modification.

It belongs to the neurotoxin 10 (Hwtx-1) family. 22 (Htx-4) subfamily. Expressed by the venom gland.

Its subcellular location is the secreted. Functionally, gating modifier toxin that traps voltage-sensing domain II of voltage-gated sodium channels in the resting state without significantly altering the voltage-dependence of activation and inactivation, or delay in recovery from inactivation. Inhibits hNav1.7/SCN9A (IC(50)=134 nM), followed in rank order of potency by Nav1.6/SCN8A (IC(50)=191 nM), Nav1.2/SCN2A (IC(50)=239 nM), Nav1.3/SCN3A (IC(50)=547 nM) and Nav1.1/SCN1A (IC(50)=674 nM). Its binding to Nav1.2, Nav1.3 and Nav1.7 is slowly reversible and incomplete, with ~25% of Nav1.2, ~50% of Nav1.3 and ~40% of Nav1.7 channels recovering from block after a 30 minutes washout, respectively. Binds in the aqueous cleft formed between the S1-S2 and S3-S4 loops of each channel subtype, primarily targeting the S3-S4 loop. This chain is Mu-theraphotoxin-Ssp1a, found in Selenotypus sp. (Feather-legged tarantula).